Here is a 583-residue protein sequence, read N- to C-terminus: Aspartate--tRNA(Asp/Asn) ligase (583 aa).

L-aspartate is bound at residue Glu171. The tract at residues 195-198 is aspartate; that stretch reads QLFK. Arg217 provides a ligand contact to L-aspartate. ATP contacts are provided by residues 217-219 and Gln226; that span reads RDE. His443 is a binding site for L-aspartate. ATP is bound at residue Glu476. Arg483 is an L-aspartate binding site. 528–531 contributes to the ATP binding site; it reads GLDR.

This sequence belongs to the class-II aminoacyl-tRNA synthetase family. Type 1 subfamily. In terms of assembly, homodimer.

The protein resides in the cytoplasm. The enzyme catalyses tRNA(Asx) + L-aspartate + ATP = L-aspartyl-tRNA(Asx) + AMP + diphosphate. Its function is as follows. Aspartyl-tRNA synthetase with relaxed tRNA specificity since it is able to aspartylate not only its cognate tRNA(Asp) but also tRNA(Asn). Reaction proceeds in two steps: L-aspartate is first activated by ATP to form Asp-AMP and then transferred to the acceptor end of tRNA(Asp/Asn). This Ruthia magnifica subsp. Calyptogena magnifica protein is Aspartate--tRNA(Asp/Asn) ligase.